A 414-amino-acid polypeptide reads, in one-letter code: Relaxin-3 receptor 2 (414 aa).

Residues 1–43 are Extracellular-facing; the sequence is MATSNSSASLPTLFWVNGSGDSVLSTDGAAMPVQFLVLRIMVA. 2 N-linked (GlcNAc...) asparagine glycosylation sites follow: Asn-5 and Asn-17. A helical membrane pass occupies residues 44 to 64; sequence LAYGLVGIIGLLGNLAVLWVL. The Cytoplasmic segment spans residues 65–77; it reads GNCGQRVPGLSSD. The helical transmembrane segment at 78 to 98 threads the bilayer; the sequence is TFVFSLALADLGLALTLPFWA. Residues 99-116 are Extracellular-facing; it reads TESAMDFHWPFGSALCKV. A disulfide bond links Cys-114 and Cys-191. The chain crosses the membrane as a helical span at residues 117–137; that stretch reads VLTTTVLSIYASTFLITALSI. The Cytoplasmic segment spans residues 138–155; it reads ARYWVVAMAVGPGSHLSV. The chain crosses the membrane as a helical span at residues 156–176; sequence FWARVVTLAVWVAAALVTVPT. Residues 177–209 are Extracellular-facing; it reads AIFGAEVELWGVCLCLLRFPSRYWLGAYQLQRV. A helical membrane pass occupies residues 210–230; sequence VLAFIVPLGVITTSYLLLLAF. The Cytoplasmic segment spans residues 231-255; sequence LERQQRCRPRQWQDSRVVARSVRVL. Residues 256 to 276 form a helical membrane-spanning segment; the sequence is VASFALCWVPNHVVTLWEILV. At 277–293 the chain is on the extracellular side; the sequence is RFDLVPWDSTFYTFHTY. Residues 294-316 traverse the membrane as a helical segment; sequence ILPITTCLAHSNSCLNPVIYCLL. At 317 to 414 the chain is on the cytoplasmic side; sequence RREPQQVLVS…SQAAVSPGEV (98 aa).

The protein belongs to the G-protein coupled receptor 1 family. Detected only in bone marrow.

It is found in the cell membrane. In terms of biological role, high affinity receptor for INSL5. Also acts as a receptor for RLN3/relaxin-3, as well as bradykinin and kallidin. Binding of the ligand inhibit cAMP accumulation. The chain is Relaxin-3 receptor 2 (Rxfp4) from Mus musculus (Mouse).